Reading from the N-terminus, the 182-residue chain is Small ribosomal subunit protein uS4c (182 aa).

The region spanning 82–143 (MRLDNILFRL…KERSKVLIQN (62 aa)) is the S4 RNA-binding domain.

It belongs to the universal ribosomal protein uS4 family. As to quaternary structure, part of the 30S ribosomal subunit. Contacts protein S5. The interaction surface between S4 and S5 is involved in control of translational fidelity.

It localises to the plastid. It is found in the chloroplast. In terms of biological role, one of the primary rRNA binding proteins, it binds directly to 16S rRNA where it nucleates assembly of the body of the 30S subunit. With S5 and S12 plays an important role in translational accuracy. In Neomarica sp. (strain Lejeune 1997), this protein is Small ribosomal subunit protein uS4c (rps4).